The chain runs to 283 residues: Pantothenate synthetase (283 aa).

30-37 (MGNLHDGH) contacts ATP. Residue His-37 is the Proton donor of the active site. Gln-61 serves as a coordination point for (R)-pantoate. Gln-61 contributes to the beta-alanine binding site. 149-152 (GEKD) contacts ATP. A (R)-pantoate-binding site is contributed by Gln-155. 186–189 (LSSR) lines the ATP pocket.

The protein belongs to the pantothenate synthetase family. In terms of assembly, homodimer.

It localises to the cytoplasm. It carries out the reaction (R)-pantoate + beta-alanine + ATP = (R)-pantothenate + AMP + diphosphate + H(+). It participates in cofactor biosynthesis; (R)-pantothenate biosynthesis; (R)-pantothenate from (R)-pantoate and beta-alanine: step 1/1. Functionally, catalyzes the condensation of pantoate with beta-alanine in an ATP-dependent reaction via a pantoyl-adenylate intermediate. The protein is Pantothenate synthetase of Escherichia coli O45:K1 (strain S88 / ExPEC).